The primary structure comprises 500 residues: NAD(P)H-quinone oxidoreductase chain 4, chloroplastic (500 aa).

14 helical membrane-spanning segments follow: residues 4–24 (FPWLTIIVVLPIFAGSLIFFL), 31–51 (VIFWYTICISILELLLTTYAF), 84–104 (GLSIGPILLTGFITTLATLAA), 111–131 (ARLFHFLMLVMYSGQIGLFSC), 134–154 (LLLFFLMWEFELIPVYLLLSM), 167–187 (FILYTAGGSVFLLMGALGIGL), 212–232 (IFYIGFFIAFAVKLPIIPLHT), 242–262 (HYSTCMLLAGILLKMGAYGLV), 272–292 (AHSLFSPWLMIVGAMQIIYAA), 308–328 (SSVSHMGFLIIGIGSITDIGL), 330–350 (GALLQIISHGFIGAALFFLAG), 386–406 (LALPGMSGFVTEFIVFFGLIT), 411–431 (LLMAKILIPFVMAIGIILTPI), and 462–482 (LFLSISIFLPILGIGLYPDFV).

The protein belongs to the complex I subunit 4 family.

The protein resides in the plastid. It is found in the chloroplast thylakoid membrane. It catalyses the reaction a plastoquinone + NADH + (n+1) H(+)(in) = a plastoquinol + NAD(+) + n H(+)(out). It carries out the reaction a plastoquinone + NADPH + (n+1) H(+)(in) = a plastoquinol + NADP(+) + n H(+)(out). The protein is NAD(P)H-quinone oxidoreductase chain 4, chloroplastic of Jasminum nudiflorum (Winter jasmine).